The chain runs to 273 residues: Putative phosphoenolpyruvate synthase regulatory protein (273 aa).

Residue G153 to T160 participates in ADP binding.

The protein belongs to the pyruvate, phosphate/water dikinase regulatory protein family. PSRP subfamily.

The catalysed reaction is [pyruvate, water dikinase] + ADP = [pyruvate, water dikinase]-phosphate + AMP + H(+). It carries out the reaction [pyruvate, water dikinase]-phosphate + phosphate + H(+) = [pyruvate, water dikinase] + diphosphate. Its function is as follows. Bifunctional serine/threonine kinase and phosphorylase involved in the regulation of the phosphoenolpyruvate synthase (PEPS) by catalyzing its phosphorylation/dephosphorylation. In Sodalis glossinidius (strain morsitans), this protein is Putative phosphoenolpyruvate synthase regulatory protein.